The primary structure comprises 529 residues: Glutamyl-tRNA reductase (529 aa).

47–50 provides a ligand contact to substrate; it reads TCNR. The Nucleophile role is filled by Cys-48. Positions 56–80 are disordered; the sequence is SPRQQAPAPPRPGSAPPPSDEELSR. Residues 62 to 73 are compositionally biased toward pro residues; that stretch reads PAPPRPGSAPPP. Substrate is bound by residues Ser-125, 130 to 132, and Gln-136; that span reads EPQ. An NADP(+)-binding site is contributed by 205–210; sequence GAGDMA. The disordered stretch occupies residues 454-505; it reads RGAVDGPPTPRSARGAAPPASGARGGGSPRHADPRPQAAEDNGVYARQPGGR. The span at 464-475 shows a compositional bias: low complexity; that stretch reads RSARGAAPPASG.

It belongs to the glutamyl-tRNA reductase family. As to quaternary structure, homodimer.

It catalyses the reaction (S)-4-amino-5-oxopentanoate + tRNA(Glu) + NADP(+) = L-glutamyl-tRNA(Glu) + NADPH + H(+). Its pathway is porphyrin-containing compound metabolism; protoporphyrin-IX biosynthesis; 5-aminolevulinate from L-glutamyl-tRNA(Glu): step 1/2. Its function is as follows. Catalyzes the NADPH-dependent reduction of glutamyl-tRNA(Glu) to glutamate 1-semialdehyde (GSA). The protein is Glutamyl-tRNA reductase of Sorangium cellulosum (strain So ce56) (Polyangium cellulosum (strain So ce56)).